Consider the following 819-residue polypeptide: Nuclear pore complex protein Nup93 (819 aa).

At Thr-49 the chain carries Phosphothreonine. 7 positions are modified to phosphoserine: Ser-52, Ser-66, Ser-72, Ser-75, Ser-80, Ser-430, and Ser-767.

This sequence belongs to the nucleoporin interacting component (NIC) family. As to quaternary structure, part of the nuclear pore complex (NPC). Component of the p62 complex, a complex composed of NUP62 and NUP54. Forms a complex with NUP35, NUP155, NUP205 and lamin B; the interaction with NUP35 is direct. Does not interact with TPR. Interacts with SMAD4 and IPO7; translocates SMAD4 to the nucleus through the NPC upon BMP7 stimulation resulting in activation of SMAD4 signaling.

It is found in the nucleus membrane. It localises to the nucleus. The protein resides in the nuclear pore complex. The protein localises to the nucleus envelope. In terms of biological role, plays a role in the nuclear pore complex (NPC) assembly and/or maintenance. May anchor nucleoporins, but not NUP153 and TPR, to the NPC. During renal development, regulates podocyte migration and proliferation through SMAD4 signaling. The sequence is that of Nuclear pore complex protein Nup93 (NUP93) from Bos taurus (Bovine).